The sequence spans 290 residues: 33 kDa chaperonin (290 aa).

Cystine bridges form between Cys-236–Cys-238 and Cys-269–Cys-272.

Belongs to the HSP33 family. In terms of processing, under oxidizing conditions two disulfide bonds are formed involving the reactive cysteines. Under reducing conditions zinc is bound to the reactive cysteines and the protein is inactive.

The protein resides in the cytoplasm. In terms of biological role, redox regulated molecular chaperone. Protects both thermally unfolding and oxidatively damaged proteins from irreversible aggregation. Plays an important role in the bacterial defense system toward oxidative stress. This chain is 33 kDa chaperonin, found in Brevibacillus brevis (strain 47 / JCM 6285 / NBRC 100599).